Here is a 183-residue protein sequence, read N- to C-terminus: Transmembrane and coiled-coil domain-containing protein 2 (183 aa).

Residues 54–74 (VQIILGISFLTLLAIGLFALW) traverse the membrane as a helical segment. Residues 127-150 (GLQEKILKKLQMVENKVRDLEGII) adopt a coiled-coil conformation.

The protein resides in the membrane. The sequence is that of Transmembrane and coiled-coil domain-containing protein 2 (Tmco2) from Mus musculus (Mouse).